The following is a 437-amino-acid chain: MTHYHFVGIKGAGMSSLAQIMHDLGHEVQGSDIEKYVFTEVALKNKGIKILPFNADNIKEGMVVIQGNAFPDTHEEIVKAHDLKLDVIRYHDFLGHVIDQYTSVAVTGAHGKTSTTGLLSHVMNGDKKTSFLIGDGTGMGLPASDYFAFEACEYRRHFLSYHPDYAIMTNIDFDHPDYFKDIDDVASAFQSMAHNVKKAIIAWGDDDHLRQLKADVPIYYYGLNKNDDIYADNIQITDKGTQFDVYVNGEYYDQFLSPQYGDHNIQNALAVIAISYLEKMDVNNIKEALETFGGVKRRFNETNVANQVLVDDYAHHPREISATIETARKKYPNKDIVAVFQPHTFSRTQAFLDEFATSLSKADHVYLCEIFGSIRENTGDLTIQDLINRIDGSALIEENNIDVLDQFDNAVILFMGAGDIQKLQRAYEEHVGMTNEF.

108–114 contacts ATP; sequence GAHGKTS.

Belongs to the MurCDEF family.

Its subcellular location is the cytoplasm. It carries out the reaction UDP-N-acetyl-alpha-D-muramate + L-alanine + ATP = UDP-N-acetyl-alpha-D-muramoyl-L-alanine + ADP + phosphate + H(+). The protein operates within cell wall biogenesis; peptidoglycan biosynthesis. Its function is as follows. Cell wall formation. This chain is UDP-N-acetylmuramate--L-alanine ligase, found in Staphylococcus haemolyticus (strain JCSC1435).